Consider the following 399-residue polypeptide: Tryptophan synthase beta chain (399 aa).

An N6-(pyridoxal phosphate)lysine modification is found at K92.

It belongs to the TrpB family. Tetramer of two alpha and two beta chains. Requires pyridoxal 5'-phosphate as cofactor.

The catalysed reaction is (1S,2R)-1-C-(indol-3-yl)glycerol 3-phosphate + L-serine = D-glyceraldehyde 3-phosphate + L-tryptophan + H2O. It participates in amino-acid biosynthesis; L-tryptophan biosynthesis; L-tryptophan from chorismate: step 5/5. In terms of biological role, the beta subunit is responsible for the synthesis of L-tryptophan from indole and L-serine. The chain is Tryptophan synthase beta chain from Bordetella pertussis (strain Tohama I / ATCC BAA-589 / NCTC 13251).